Reading from the N-terminus, the 604-residue chain is Elongation factor 4 (604 aa).

The region spanning 7–189 (KNIRNFCIIA…QIVTKIPAPS (183 aa)) is the tr-type G domain. GTP-binding positions include 19-24 (DHGKST) and 136-139 (NKID).

Belongs to the TRAFAC class translation factor GTPase superfamily. Classic translation factor GTPase family. LepA subfamily.

The protein resides in the cell membrane. The enzyme catalyses GTP + H2O = GDP + phosphate + H(+). Its function is as follows. Required for accurate and efficient protein synthesis under certain stress conditions. May act as a fidelity factor of the translation reaction, by catalyzing a one-codon backward translocation of tRNAs on improperly translocated ribosomes. Back-translocation proceeds from a post-translocation (POST) complex to a pre-translocation (PRE) complex, thus giving elongation factor G a second chance to translocate the tRNAs correctly. Binds to ribosomes in a GTP-dependent manner. This is Elongation factor 4 from Lachnospira eligens (strain ATCC 27750 / DSM 3376 / VPI C15-48 / C15-B4) (Eubacterium eligens).